Consider the following 274-residue polypeptide: Nitrogenase iron protein (274 aa).

Gly8–Ser15 is a binding site for ATP. Cys94 contacts [4Fe-4S] cluster. Arg97 bears the ADP-ribosylarginine; by dinitrogenase reductase ADP-ribosyltransferase mark. Cys131 contacts [4Fe-4S] cluster.

This sequence belongs to the NifH/BchL/ChlL family. Homodimer. [4Fe-4S] cluster serves as cofactor. Post-translationally, the reversible ADP-ribosylation of Arg-97 inactivates the nitrogenase reductase and regulates nitrogenase activity.

It catalyses the reaction N2 + 8 reduced [2Fe-2S]-[ferredoxin] + 16 ATP + 16 H2O = H2 + 8 oxidized [2Fe-2S]-[ferredoxin] + 2 NH4(+) + 16 ADP + 16 phosphate + 6 H(+). Functionally, the key enzymatic reactions in nitrogen fixation are catalyzed by the nitrogenase complex, which has 2 components: the iron protein and the molybdenum-iron protein. This Desulfatibacillum aliphaticivorans protein is Nitrogenase iron protein.